Here is a 400-residue protein sequence, read N- to C-terminus: Enoyl-[acyl-carrier-protein] reductase [NADH] (400 aa).

NAD(+) is bound by residues 48–53, 74–75, 111–112, and 139–140; these read GASTGY, FE, DA, and LA. Residue Y225 participates in substrate binding. Y235 (proton donor) is an active-site residue. Residues K244 and 273-275 contribute to the NAD(+) site; that span reads VVT.

It belongs to the TER reductase family. As to quaternary structure, monomer.

It catalyses the reaction a 2,3-saturated acyl-[ACP] + NAD(+) = a (2E)-enoyl-[ACP] + NADH + H(+). Its pathway is lipid metabolism; fatty acid biosynthesis. Functionally, involved in the final reduction of the elongation cycle of fatty acid synthesis (FAS II). Catalyzes the reduction of a carbon-carbon double bond in an enoyl moiety that is covalently linked to an acyl carrier protein (ACP). This chain is Enoyl-[acyl-carrier-protein] reductase [NADH], found in Burkholderia lata (strain ATCC 17760 / DSM 23089 / LMG 22485 / NCIMB 9086 / R18194 / 383).